Reading from the N-terminus, the 125-residue chain is MSLDFNTLAQNFTQFYYNQFDTDRSQLGNLYRNESMLTFETSQLQGAKDIVEKLVSLPFQKVQHRITTLDAQPASPNGDVLVMITGDLLIDEEQNPQRFSQVFHLIPDGNSYYVFNDIFRLNYSA.

Ser-2 bears the N-acetylserine mark. The 114-residue stretch at 8–121 (LAQNFTQFYY…YYVFNDIFRL (114 aa)) folds into the NTF2 domain. Residue Lys-53 forms a Glycyl lysine isopeptide (Lys-Gly) (interchain with G-Cter in ubiquitin) linkage.

The protein localises to the cytoplasm. In terms of biological role, facilitates protein transport into the nucleus. Interacts with various nucleoporins and with Ran-GDP. Could be part of a multicomponent system of cytosolic factors that assemble at the pore complex during nuclear import. In vitro, the NTF2-Ran-GDP association, in the presence of GTP, triggers dissociation of the karyopherin alpha-beta complex, allowing nuclear translocation of karyopherin alpha and the NLS substrate. This is Nuclear transport factor 2 (NTF2) from Saccharomyces cerevisiae (strain ATCC 204508 / S288c) (Baker's yeast).